A 162-amino-acid polypeptide reads, in one-letter code: uncharacterized protein (162 aa).

Positions D129–G161 form a coiled coil.

This is an uncharacterized protein from Aquifex aeolicus (strain VF5).